The sequence spans 73 residues: uncharacterized protein (73 aa).

A signal peptide spans 1–22; that stretch reads MKILGVTGFILICLLAISVLMD. The helical transmembrane segment at 44 to 66 threads the bilayer; sequence TFAEWVVLLFFVLVLVREMYVIY.

The protein resides in the membrane. This is an uncharacterized protein from Bacillus subtilis (strain 168).